We begin with the raw amino-acid sequence, 51 residues long: Micropeptide inhibiting actin cytoskeleton (51 aa).

The tract at residues 1–22 (MERAGVPGFSPRRSSVEAKMQS) is disordered.

Interacts with aquaporin AQP2.

Its function is as follows. Reduces filamentous actin fibers by interacting with aquaporin AQP2 which leads to inhibition of the expression of SEPTIN4 and integrin ITGB4. Also inhibits the activation of the EREG/EGFR signaling pathway through interaction with AQP2. This is Micropeptide inhibiting actin cytoskeleton from Homo sapiens (Human).